Reading from the N-terminus, the 143-residue chain is Deoxyuridine 5'-triphosphate nucleotidohydrolase (143 aa).

Substrate contacts are provided by residues 63 to 65 (RSG), Asn-76, 80 to 82 (TID), and Lys-90.

It belongs to the dUTPase family. The cofactor is Mg(2+).

The catalysed reaction is dUTP + H2O = dUMP + diphosphate + H(+). It functions in the pathway pyrimidine metabolism; dUMP biosynthesis; dUMP from dCTP (dUTP route): step 2/2. This enzyme is involved in nucleotide metabolism: it produces dUMP, the immediate precursor of thymidine nucleotides and it decreases the intracellular concentration of dUTP so that uracil cannot be incorporated into DNA. This Finegoldia magna (strain ATCC 29328 / DSM 20472 / WAL 2508) (Peptostreptococcus magnus) protein is Deoxyuridine 5'-triphosphate nucleotidohydrolase.